The sequence spans 159 residues: Endoribonuclease YbeY (159 aa).

Positions 123, 127, and 133 each coordinate Zn(2+).

The protein belongs to the endoribonuclease YbeY family. The cofactor is Zn(2+).

Its subcellular location is the cytoplasm. Its function is as follows. Single strand-specific metallo-endoribonuclease involved in late-stage 70S ribosome quality control and in maturation of the 3' terminus of the 16S rRNA. The sequence is that of Endoribonuclease YbeY from Bacillus pumilus (strain SAFR-032).